A 1207-amino-acid polypeptide reads, in one-letter code: DNA-directed RNA polymerase subunit beta' (1207 aa).

Residues C60, C62, C75, and C78 each coordinate Zn(2+). 3 residues coordinate Mg(2+): D449, D451, and D453. Zn(2+) is bound by residues C822, C896, C903, and C906.

It belongs to the RNA polymerase beta' chain family. The RNAP catalytic core consists of 2 alpha, 1 beta, 1 beta' and 1 omega subunit. When a sigma factor is associated with the core the holoenzyme is formed, which can initiate transcription. Requires Mg(2+) as cofactor. The cofactor is Zn(2+).

It catalyses the reaction RNA(n) + a ribonucleoside 5'-triphosphate = RNA(n+1) + diphosphate. Its function is as follows. DNA-dependent RNA polymerase catalyzes the transcription of DNA into RNA using the four ribonucleoside triphosphates as substrates. This chain is DNA-directed RNA polymerase subunit beta', found in Staphylococcus aureus (strain USA300).